Reading from the N-terminus, the 335-residue chain is Mitochondrial uncoupling protein 4C (335 aa).

Solcar repeat units follow at residues 34 to 125 (RNLF…FRRP), 137 to 229 (LKIY…SKRT), and 238 to 329 (EGLP…LRQW). The next 6 helical transmembrane spans lie at 40–57 (YVNTFIGANLAESCVFPL), 100–118 (GFSAMVTRNFIFNSLRVVL), 138–157 (KIYMALGCSFTAGCIAQALA), 204–223 (GVGPSCMRACLMTTGDVGSY), 244–264 (FVSSMCAGLTASVLSTPADVI), and 304–323 (GLMPTWFRLGPFSVLFWLSV).

It belongs to the mitochondrial carrier (TC 2.A.29) family.

Its subcellular location is the mitochondrion inner membrane. In terms of biological role, mitochondrial protein that is likely to be responsible for thermogenic respiration. Likely to function in mitochondrial uncoupling i.e. creating mitochondrial proton leaks across the inner mitochondrial membrane and can therefore dissipate the mitochondrial proton gradient and convert the energy of substrate oxidation into heat instead of ATP. Involved in cold tolerance, it is required for development to the adult stage at low temperatures. The protein is Mitochondrial uncoupling protein 4C of Drosophila melanogaster (Fruit fly).